An 82-amino-acid polypeptide reads, in one-letter code: Auxin-induced protein 15A (82 aa).

It belongs to the ARG7 family.

The sequence is that of Auxin-induced protein 15A from Glycine max (Soybean).